The chain runs to 103 residues: NADH-quinone oxidoreductase subunit K (103 aa).

Transmembrane regions (helical) follow at residues 5-25 (ISSYLMVALILFCVGLYGALT), 30-50 (VVVLLSIELMLNAVNINLVAF), and 66-86 (LFTMTVAAAEVAVGLAILIAL).

Belongs to the complex I subunit 4L family. In terms of assembly, NDH-1 is composed of 14 different subunits. Subunits NuoA, H, J, K, L, M, N constitute the membrane sector of the complex.

It is found in the cell membrane. The catalysed reaction is a quinone + NADH + 5 H(+)(in) = a quinol + NAD(+) + 4 H(+)(out). NDH-1 shuttles electrons from NADH, via FMN and iron-sulfur (Fe-S) centers, to quinones in the respiratory chain. The immediate electron acceptor for the enzyme in this species is believed to be a menaquinone. Couples the redox reaction to proton translocation (for every two electrons transferred, four hydrogen ions are translocated across the cytoplasmic membrane), and thus conserves the redox energy in a proton gradient. The polypeptide is NADH-quinone oxidoreductase subunit K (Brevibacillus brevis (strain 47 / JCM 6285 / NBRC 100599)).